A 346-amino-acid chain; its full sequence is Hexosaminidase D (346 aa).

Catalysis depends on E141, which acts as the Proton donor.

This sequence belongs to the glycosyl hydrolase 20 family. Homodimer; disulfide-linked.

It localises to the cytoplasm. It is found in the nucleus. Its subcellular location is the extracellular vesicle. The catalysed reaction is Hydrolysis of terminal non-reducing N-acetyl-D-hexosamine residues in N-acetyl-beta-D-hexosaminides.. Its activity is regulated as follows. Inhibited by O-(2-acetamido-2-deoxy-D-glucopyranosylidene)amino N-phenylcarbamate (PUGNAc). Inhibited by galacto-NAG-thiazoline. Its function is as follows. Has hexosaminidase activity. Responsible for the cleavage of the monosaccharides N-acetylglucosamine (GlcNAc) and N-acetylgalactosamine (GalNAc) from cellular substrates. Has a preference for galactosaminide over glucosaminide substrates. This chain is Hexosaminidase D, found in Bos taurus (Bovine).